Consider the following 347-residue polypeptide: Iron-sulfur cluster assembly protein SufC (347 aa).

The region spanning 100 to 346 (LEIKDLHAIE…ENKGYSQFLK (247 aa)) is the ABC transporter domain. Residue 134–141 (GRNGSGKS) participates in ATP binding.

This sequence belongs to the ABC transporter superfamily. Ycf16 family. Component of a complex composed of SufB, SufC and SufD in a stoichiometric ratio of 1:2:1. Interacts with SufB. Interacts with SufD; the interaction enhances the ATPase activity of SufC. In terms of processing, proteolytically cleaved.

The protein resides in the plastid. The protein localises to the apicoplast. The enzyme catalyses ATP + H2O = ADP + phosphate + H(+). It participates in cofactor biosynthesis; iron-sulfur cluster biosynthesis. Participates in the sulfur mobilization (SUF) pathway for iron-sulfur (Fe-S) cluster biogenesis. As part of a complex consisting of SufB-SufC(2)-SufD, involved in assembly of [4Fe-4S] clusters. Exhibits ATPase activity. This is Iron-sulfur cluster assembly protein SufC from Plasmodium falciparum (isolate 3D7).